The primary structure comprises 449 residues: tRNA-2-methylthio-N(6)-dimethylallyladenosine synthase (449 aa).

One can recognise an MTTase N-terminal domain in the interval 7 to 124 (DAFYIHTFGC…LPLLIKQVQQ (118 aa)). Positions 16, 52, 87, 163, 167, and 170 each coordinate [4Fe-4S] cluster. Positions 149-379 (RSSSMSAFVP…IECQNRISAS (231 aa)) constitute a Radical SAM core domain. The TRAM domain occupies 382–445 (SQAVGSVVEV…SATLLGEPLI (64 aa)).

The protein belongs to the methylthiotransferase family. MiaB subfamily. As to quaternary structure, monomer. [4Fe-4S] cluster serves as cofactor.

It localises to the cytoplasm. It carries out the reaction N(6)-dimethylallyladenosine(37) in tRNA + (sulfur carrier)-SH + AH2 + 2 S-adenosyl-L-methionine = 2-methylsulfanyl-N(6)-dimethylallyladenosine(37) in tRNA + (sulfur carrier)-H + 5'-deoxyadenosine + L-methionine + A + S-adenosyl-L-homocysteine + 2 H(+). Its function is as follows. Catalyzes the methylthiolation of N6-(dimethylallyl)adenosine (i(6)A), leading to the formation of 2-methylthio-N6-(dimethylallyl)adenosine (ms(2)i(6)A) at position 37 in tRNAs that read codons beginning with uridine. The polypeptide is tRNA-2-methylthio-N(6)-dimethylallyladenosine synthase (Chlorobium chlorochromatii (strain CaD3)).